A 128-amino-acid chain; its full sequence is Anion exchange transporter (128 aa).

The Extracellular segment spans residues 1 to 14 (LFSFKELNEQFKRK). The chain crosses the membrane as a helical span at residues 15–35 (IKVVLPVDLVLIIAASFACYC). Over 36–66 (TNMENTYGLEVVGHIPRGIPPPRAPPMNILS) the chain is Cytoplasmic. The helical transmembrane segment at 67–87 (AVITEAFGVALVGYAASLALA) threads the bilayer. At 88–103 (QGSAKKFKYSVDDNQE) the chain is on the extracellular side. A helical transmembrane segment spans residues 104–124 (FLAHGLSNVISSFLFCIPSAA). The Cytoplasmic segment spans residues 125 to 128 (AMGR).

The protein belongs to the SLC26A/SulP transporter (TC 2.A.53) family. In terms of tissue distribution, expressed in gastric epithelium, predominantly in the gastric parietal cells but also at lower levels in mucosal cells.

It localises to the basolateral cell membrane. It is found in the recycling endosome membrane. Its subcellular location is the apical cell membrane. The protein resides in the lateral cell membrane. It catalyses the reaction chloride(in) = chloride(out). It carries out the reaction iodide(out) = iodide(in). The enzyme catalyses bromide(in) = bromide(out). The catalysed reaction is oxalate(in) = oxalate(out). It catalyses the reaction nitrate(in) = nitrate(out). It carries out the reaction sulfate(in) = sulfate(out). The enzyme catalyses D-gluconate(in) = D-gluconate(out). The catalysed reaction is thiocyanate(in) = thiocyanate(out). It catalyses the reaction hydrogencarbonate(in) = hydrogencarbonate(out). It carries out the reaction hydrogencarbonate(in) + chloride(out) = hydrogencarbonate(out) + chloride(in). Its function is as follows. Acts as an anion channel mediating the transport of chloride, bromide, iodide, nitrate, sulfate, gluconate, thiocyanate, oxalate and bicarbonate ions. Its permeability towards bicarbonate is weak and increases when pH is above 7. Mediates thiocyanate transport in retinal pigment epithelium cells. Mediates iodide transport in the thyroid gland, playing an important role in the synthesis of thyroid hormones and the maintenance of thyroid function. This Oryctolagus cuniculus (Rabbit) protein is Anion exchange transporter.